A 103-amino-acid chain; its full sequence is N(4)-acetylcytidine amidohydrolase (103 aa).

Positions 6 to 94 constitute an ASCH domain; it reads ITFFQRFQND…IAEIYPNQTQ (89 aa). Lys-21 (proton acceptor) is an active-site residue. The active-site Nucleophile is the Thr-24. Glu-74 acts as the Proton donor in catalysis.

The protein belongs to the N(4)-acetylcytidine amidohydrolase family.

The catalysed reaction is N(4)-acetylcytidine + H2O = cytidine + acetate + H(+). It carries out the reaction N(4)-acetyl-2'-deoxycytidine + H2O = 2'-deoxycytidine + acetate + H(+). It catalyses the reaction N(4)-acetylcytosine + H2O = cytosine + acetate + H(+). Catalyzes the hydrolysis of N(4)-acetylcytidine (ac4C). This Salmonella heidelberg (strain SL476) protein is N(4)-acetylcytidine amidohydrolase (yqfB).